The primary structure comprises 356 residues: UDP-N-acetylenolpyruvoylglucosamine reductase (356 aa).

Residues 19-227 (LGGPAARFCS…RDAVLSLRRS (209 aa)) form the FAD-binding PCMH-type domain. The active site involves Arg-167. Ser-244 serves as the catalytic Proton donor. Residue Glu-348 is part of the active site.

Belongs to the MurB family. FAD is required as a cofactor.

It is found in the cytoplasm. It carries out the reaction UDP-N-acetyl-alpha-D-muramate + NADP(+) = UDP-N-acetyl-3-O-(1-carboxyvinyl)-alpha-D-glucosamine + NADPH + H(+). Its pathway is cell wall biogenesis; peptidoglycan biosynthesis. Its function is as follows. Cell wall formation. In Thermobifida fusca (strain YX), this protein is UDP-N-acetylenolpyruvoylglucosamine reductase.